The sequence spans 283 residues: Elongation factor Ts (283 aa).

The involved in Mg(2+) ion dislocation from EF-Tu stretch occupies residues 79–82 (TDFV).

It belongs to the EF-Ts family.

The protein resides in the cytoplasm. Functionally, associates with the EF-Tu.GDP complex and induces the exchange of GDP to GTP. It remains bound to the aminoacyl-tRNA.EF-Tu.GTP complex up to the GTP hydrolysis stage on the ribosome. This chain is Elongation factor Ts, found in Shewanella baltica (strain OS155 / ATCC BAA-1091).